Consider the following 309-residue polypeptide: Probable ABC transporter permease protein YesP (309 aa).

Helical transmembrane passes span 29–49 (FIIG…FLSF), 84–104 (FTYV…IAVI), 114–134 (IYRT…VAIM), 167–187 (ALWT…LIFL), 217–237 (LPIL…SAFM), and 275–295 (YASA…LILF). The ABC transmembrane type-1 domain maps to 80–294 (LKVTFTYVLA…VIVGLITLIL (215 aa)).

Belongs to the binding-protein-dependent transport system permease family. MalFG subfamily.

The protein resides in the cell membrane. Part of a binding-protein-dependent transport system. Probably responsible for the translocation of the substrate across the membrane. This chain is Probable ABC transporter permease protein YesP (yesP), found in Bacillus subtilis (strain 168).